A 441-amino-acid polypeptide reads, in one-letter code: Serine hydroxymethyltransferase (441 aa).

Residues Leu119 and 123–125 (GHL) each bind (6S)-5,6,7,8-tetrahydrofolate. Lys228 is modified (N6-(pyridoxal phosphate)lysine). Residue 370-372 (SPF) coordinates (6S)-5,6,7,8-tetrahydrofolate.

The protein belongs to the SHMT family. In terms of assembly, homodimer. Pyridoxal 5'-phosphate serves as cofactor.

Its subcellular location is the cytoplasm. It carries out the reaction (6R)-5,10-methylene-5,6,7,8-tetrahydrofolate + glycine + H2O = (6S)-5,6,7,8-tetrahydrofolate + L-serine. It participates in one-carbon metabolism; tetrahydrofolate interconversion. The protein operates within amino-acid biosynthesis; glycine biosynthesis; glycine from L-serine: step 1/1. Its function is as follows. Catalyzes the reversible interconversion of serine and glycine with tetrahydrofolate (THF) serving as the one-carbon carrier. This reaction serves as the major source of one-carbon groups required for the biosynthesis of purines, thymidylate, methionine, and other important biomolecules. Also exhibits THF-independent aldolase activity toward beta-hydroxyamino acids, producing glycine and aldehydes, via a retro-aldol mechanism. This chain is Serine hydroxymethyltransferase, found in Chlorobium phaeovibrioides (strain DSM 265 / 1930) (Prosthecochloris vibrioformis (strain DSM 265)).